The sequence spans 238 residues: Endonuclease III homolog (238 aa).

Residues 129-155 (REKGLPREMKDLISLPGIGNKMALLYM) enclose the HhH domain. Residue Lys-149 is the Nucleophile; for N-glycosylase activity of the active site. [4Fe-4S] cluster is bound by residues Cys-217, Cys-224, Cys-227, and Cys-233.

This sequence belongs to the Nth/MutY family. [4Fe-4S] cluster is required as a cofactor.

It localises to the nucleus. The protein localises to the mitochondrion. It carries out the reaction 2'-deoxyribonucleotide-(2'-deoxyribose 5'-phosphate)-2'-deoxyribonucleotide-DNA = a 3'-end 2'-deoxyribonucleotide-(2,3-dehydro-2,3-deoxyribose 5'-phosphate)-DNA + a 5'-end 5'-phospho-2'-deoxyribonucleoside-DNA + H(+). In terms of biological role, bifunctional DNA N-glycosylase with associated apurinic/apyrimidinic (AP) lyase function that catalyzes the first step in base excision repair (BER), the primary repair pathway for the repair of oxidative DNA damage. The DNA N-glycosylase activity releases the damaged DNA base from DNA by cleaving the N-glycosidic bond, leaving an AP site. The AP lyase activity cleaves the phosphodiester bond 3' to the AP site by a beta-elimination. Primarily recognizes and repairs oxidative base damage of pyrimidines. In Encephalitozoon cuniculi (strain GB-M1) (Microsporidian parasite), this protein is Endonuclease III homolog.